The following is a 239-amino-acid chain: Ribonuclease 3 (239 aa).

The RNase III domain occupies histidine 11 to aspartate 133. Glutamate 46 is a binding site for Mg(2+). Residue aspartate 50 is part of the active site. Mg(2+)-binding residues include aspartate 119 and glutamate 122. Residue glutamate 122 is part of the active site. The DRBM domain maps to aspartate 160 to glutamate 230.

This sequence belongs to the ribonuclease III family. In terms of assembly, homodimer. Mg(2+) is required as a cofactor.

Its subcellular location is the cytoplasm. The catalysed reaction is Endonucleolytic cleavage to 5'-phosphomonoester.. Its function is as follows. Digests double-stranded RNA. Involved in the processing of primary rRNA transcript to yield the immediate precursors to the large and small rRNAs (23S and 16S). Also processes some mRNAs, and tRNAs when they are encoded in the rRNA operon. In terms of biological role, CRISPR (clustered regularly interspaced short palindromic repeat) is an adaptive immune system that provides protection against mobile genetic elements (viruses, transposable elements and conjugative plasmids). CRISPR clusters contain spacers, sequences complementary to antecedent mobile elements, and target invading nucleic acids. CRISPR clusters are transcribed and processed into CRISPR RNA (crRNA). In this organism endogenous ribonuclease 3 and Cas9 are required for correct coprocessing of pre-crRNA and the trans-encoded small RNA (tracrRNA). Cas9, crRNA and tracrRNA are required for cleavage of invading DNA. Complements pre-crRNA and tracrRNA coprocessing defects in an rnc deletion in S.pyogenes strain 370. This is Ribonuclease 3 from Neisseria meningitidis serogroup A / serotype 4A (strain DSM 15465 / Z2491).